The chain runs to 583 residues: Malonate--CoA ligase ACSF3, mitochondrial (583 aa).

The transit peptide at 1-27 (MPPHLALPFRRLFWSLASSQLIPRRHR) directs the protein to the mitochondrion. Residues 202–210 (TSGTTGRPK), Asp-455, Arg-469, and Lys-561 contribute to the ATP site.

This sequence belongs to the ATP-dependent AMP-binding enzyme family.

It localises to the mitochondrion. It catalyses the reaction tetracosanoate + ATP + CoA = tetracosanoyl-CoA + AMP + diphosphate. The enzyme catalyses malonate + ATP + CoA = malonyl-CoA + AMP + diphosphate. Functionally, catalyzes the initial reaction in intramitochondrial fatty acid synthesis, by activating malonate and methylmalonate, but not acetate, into their respective CoA thioester. May have some preference toward very-long-chain substrates. This Mus musculus (Mouse) protein is Malonate--CoA ligase ACSF3, mitochondrial.